The following is a 212-amino-acid chain: U8 snoRNA-decapping enzyme (212 aa).

The interval 1–23 (MAESRSPDRGAKEDKPRPRNISR) is disordered. His37, Arg63, and Phe70 together coordinate substrate. The Nudix hydrolase domain maps to 39–187 (LLHAPSQAKL…IGNSKSQLLY (149 aa)). Positions 72, 89, 93, and 150 each coordinate Mn(2+). The Nudix box signature appears at 74-95 (FVDTRDISLEEGLKRELEEELG). Substrate contacts are provided by Asn180 and Gln184.

The protein belongs to the Nudix hydrolase family. NUDT16 subfamily. In terms of assembly, homodimer. Requires Mg(2+) as cofactor. Mn(2+) is required as a cofactor. Co(2+) serves as cofactor. As to expression, detected in ovary, and at very low levels in epithelial cells (at protein level).

It is found in the nucleus. The protein localises to the nucleolus. Its subcellular location is the nucleoplasm. The protein resides in the cytoplasm. It carries out the reaction a 5'-end (N(7)-methyl 5'-triphosphoguanosine)-ribonucleoside in mRNA + H2O = N(7)-methyl-GDP + a 5'-end phospho-ribonucleoside in mRNA + 2 H(+). The enzyme catalyses IDP + H2O = IMP + phosphate + H(+). It catalyses the reaction dIDP + H2O = dIMP + phosphate + H(+). The catalysed reaction is a 5'-end NAD(+)-phospho-ribonucleoside in mRNA + H2O = a 5'-end phospho-ribonucleoside in mRNA + NAD(+) + H(+). It carries out the reaction a 5'-end FAD-phospho-ribonucleoside in mRNA + H2O = a 5'-end phospho-adenosine-phospho-ribonucleoside in mRNA + FMN + 2 H(+). The enzyme catalyses a 5'-end CoA-ribonucleoside in mRNA + H2O = a 5'-end phospho-adenosine-phospho-ribonucleoside in mRNA + (R)-4'-phosphopantetheine + 2 H(+). In terms of biological role, RNA-binding and decapping enzyme that catalyzes the cleavage of the cap structure of snoRNAs and mRNAs in a metal-dependent manner. Part of the U8 snoRNP complex that is required for the accumulation of mature 5.8S and 28S rRNA. Has diphosphatase activity and removes m7G and/or m227G caps from U8 snoRNA and leaves a 5'monophosphate on the RNA. Also catalyzes the cleavage of the cap structure on mRNAs. Does not hydrolyze cap analog structures like 7-methylguanosine nucleoside triphosphate (m7GpppG). Also hydrolysis m7G- and m227G U3-capped RNAs but with less efficiencies. Has broad substrate specificity with manganese or cobalt as cofactor and can act on various RNA species. Binds to the U8 snoRNA; metal is not required for RNA-binding. May play a role in the regulation of snoRNAs and mRNAs degradation. Also acts as a phosphatase; hydrolyzes the non-canonical purine nucleotides inosine diphosphate (IDP) and deoxyinosine diphosphate (dITP) as well as guanosine diphosphate (GDP), deoxyguanosine diphosphate (dGDP), xanthine diphosphate (XDP), inosine triphosphate (ITP) and deoxyinosine triphosphate (ITP) to their respective monophosphate derivatives and does not distinguish between the deoxy- and ribose forms. The order of activity with different substrates is IDP &gt; dIDP &gt;&gt; GDP = dGDP &gt; XDP = ITP = dITP. Binds strongly to GTP, ITP and XTP. Participates in the hydrolysis of dIDP/IDP and probably excludes non-canonical purines from RNA and DNA precursor pools, thus preventing their incorporation into RNA and DNA and avoiding chromosomal lesions. Exhibits decapping activity towards NAD-capped RNAs and FAD-capped RNAs. Exhibits decapping activity towards dpCoA-capped RNAs in vitro. The chain is U8 snoRNA-decapping enzyme (nudt16) from Xenopus laevis (African clawed frog).